A 797-amino-acid chain; its full sequence is Outer membrane protein assembly factor BamA (797 aa).

A signal peptide spans 1 to 21; that stretch reads MKLKQIASALMMLGISPLALA. POTRA domains are found at residues 23–90, 91–171, 174–262, 265–344, and 347–421; these read FTIQ…VIER, PTIG…IDEG, AKIT…VHEG, FRWG…IEPG, and IYVN…LTER.

The protein belongs to the BamA family. Part of the Bam complex.

The protein resides in the cell outer membrane. Part of the outer membrane protein assembly complex, which is involved in assembly and insertion of beta-barrel proteins into the outer membrane. This is Outer membrane protein assembly factor BamA from Neisseria meningitidis serogroup B (strain ATCC BAA-335 / MC58).